Here is a 328-residue protein sequence, read N- to C-terminus: Malate dehydrogenase (328 aa).

An NAD(+)-binding site is contributed by 12-18; sequence GAAGQIG. Residues R93 and R99 each contribute to the substrate site. Residues N106, Q113, and 130–132 contribute to the NAD(+) site; that span reads TGN. Substrate is bound by residues N132 and R163. Residue H188 is the Proton acceptor of the active site.

It belongs to the LDH/MDH superfamily. MDH type 2 family.

It catalyses the reaction (S)-malate + NAD(+) = oxaloacetate + NADH + H(+). Its function is as follows. Catalyzes the reversible oxidation of malate to oxaloacetate. The sequence is that of Malate dehydrogenase from Kocuria rhizophila (strain ATCC 9341 / DSM 348 / NBRC 103217 / DC2201).